The sequence spans 488 residues: Ribulose bisphosphate carboxylase large chain (488 aa).

Substrate is bound by residues Asn127 and Thr177. The active-site Proton acceptor is the Lys179. Lys181 is a substrate binding site. Positions 205, 207, and 208 each coordinate Mg(2+). Position 205 is an N6-carboxylysine (Lys205). His297 (proton acceptor) is an active-site residue. Positions 298, 330, and 382 each coordinate substrate.

The protein belongs to the RuBisCO large chain family. Type I subfamily. In terms of assembly, heterohexadecamer of 8 large chains and 8 small chains. It depends on Mg(2+) as a cofactor.

The protein resides in the plastid. The protein localises to the chloroplast. The enzyme catalyses 2 (2R)-3-phosphoglycerate + 2 H(+) = D-ribulose 1,5-bisphosphate + CO2 + H2O. The catalysed reaction is D-ribulose 1,5-bisphosphate + O2 = 2-phosphoglycolate + (2R)-3-phosphoglycerate + 2 H(+). In terms of biological role, ruBisCO catalyzes two reactions: the carboxylation of D-ribulose 1,5-bisphosphate, the primary event in carbon dioxide fixation, as well as the oxidative fragmentation of the pentose substrate in the photorespiration process. Both reactions occur simultaneously and in competition at the same active site. This is Ribulose bisphosphate carboxylase large chain from Emiliania huxleyi (Coccolithophore).